The primary structure comprises 176 residues: Peptidoglycan-associated lipoprotein (176 aa).

An N-terminal signal peptide occupies residues 1–21 (MKAGSFYKLGLLVASAVLVAA). Cysteine 22 is lipidated: N-palmitoyl cysteine. Residue cysteine 22 is the site of S-diacylglycerol cysteine attachment. Positions 60-176 (YTTQAPHNQL…RVEFIYEATR (117 aa)) constitute an OmpA-like domain.

This sequence belongs to the Pal lipoprotein family. The Tol-Pal system is composed of five core proteins: the inner membrane proteins TolA, TolQ and TolR, the periplasmic protein TolB and the outer membrane protein Pal. They form a network linking the inner and outer membranes and the peptidoglycan layer.

The protein resides in the cell outer membrane. In terms of biological role, part of the Tol-Pal system, which plays a role in outer membrane invagination during cell division and is important for maintaining outer membrane integrity. Very strongly associated with the peptidoglycan. The chain is Peptidoglycan-associated lipoprotein from Legionella pneumophila.